A 242-amino-acid polypeptide reads, in one-letter code: DNA repair protein RecO (242 aa).

It belongs to the RecO family. Monomer.

Involved in DNA repair and RecF pathway recombination. This is DNA repair protein RecO from Shigella dysenteriae serotype 1 (strain Sd197).